The following is a 257-amino-acid chain: General L-amino acid transport ATP-binding protein AapP (257 aa).

One can recognise an ABC transporter domain in the interval 18 to 252; that stretch reads VEIVNMNKWY…PQHERTKLFL (235 aa). 50-57 lines the ATP pocket; it reads GPSGSGKS.

This sequence belongs to the ABC transporter superfamily.

Part of a binding-protein-dependent transport system for L-amino acids, affects the uptake as well as the efflux of these amino acids. Probably responsible for energy coupling to the transport system. This is General L-amino acid transport ATP-binding protein AapP (aapP) from Rhizobium johnstonii (strain DSM 114642 / LMG 32736 / 3841) (Rhizobium leguminosarum bv. viciae).